Here is a 398-residue protein sequence, read N- to C-terminus: Dual specificity protein phosphatase 4 (398 aa).

Residue V2 is modified to N-acetylvaline. In terms of domain architecture, Rhodanese spans 45 to 163 (SGGKCLLLDC…FSSEYPEFCS (119 aa)). In terms of domain architecture, Tyrosine-protein phosphatase spans 199–340 (GPVEILPFLY…LLQFESQVLT (142 aa)). The active-site Phosphocysteine intermediate is C284. 2 positions are modified to phosphoserine; by MAPK: S390 and S395.

The protein belongs to the protein-tyrosine phosphatase family. Non-receptor class dual specificity subfamily. In terms of assembly, hollow spherical complex composed of 24 subunits with pseudooctahedral symmetry, has a tetramer as the basic unit. Post-translationally, phosphorylation in the C-terminus by ERK1/2 inhibits proteasomal degradation and stabilizes the protein.

The protein resides in the nucleus. The catalysed reaction is O-phospho-L-tyrosyl-[protein] + H2O = L-tyrosyl-[protein] + phosphate. The enzyme catalyses O-phospho-L-seryl-[protein] + H2O = L-seryl-[protein] + phosphate. It carries out the reaction O-phospho-L-threonyl-[protein] + H2O = L-threonyl-[protein] + phosphate. Regulates mitogenic signal transduction by dephosphorylating both Thr and Tyr residues on MAP kinases ERK1 and ERK2. The protein is Dual specificity protein phosphatase 4 (Dusp4) of Mus musculus (Mouse).